Consider the following 684-residue polypeptide: Mitochondrial translation factor ATP22 (684 aa).

A mitochondrion-targeting transit peptide spans 1 to 56; it reads MLKCICRVYSQPLAQMVTSPLFKHMGSAGTYTILPITNLRHLSTKNCPLKIKSNRS.

It belongs to the ATP22 family.

The protein resides in the mitochondrion inner membrane. Functionally, translation factor specific for subunit 6 of the mitochondrial ATPase. Required for assembly of the CF(0) component of the ATPase. This chain is Mitochondrial translation factor ATP22 (ATP22), found in Saccharomyces cerevisiae (strain YJM789) (Baker's yeast).